Reading from the N-terminus, the 280-residue chain is Undecaprenyl-diphosphatase (280 aa).

8 consecutive transmembrane segments (helical) span residues 1 to 21 (MTILQAIVLAIVEGLTEFLPV), 41 to 61 (FVRAFTVMIQFGAILSVLVLY), 87 to 107 (FDLYWKLLIALVPAVILGFLF), 115 to 135 (LGSVWVVAVVLFLGGIFMLFV), 147 to 167 (ITYPKAFVIGLFQCLAIFLPG), 186 to 206 (KAAAEFSFFLAVPTMLGATLL), 225 to 245 (IVLLVGNIVAFIVALAAIKFF), and 260 to 280 (YRILVGGLLIVLMLSGVSLAV).

This sequence belongs to the UppP family.

Its subcellular location is the cell inner membrane. It catalyses the reaction di-trans,octa-cis-undecaprenyl diphosphate + H2O = di-trans,octa-cis-undecaprenyl phosphate + phosphate + H(+). Its function is as follows. Catalyzes the dephosphorylation of undecaprenyl diphosphate (UPP). Confers resistance to bacitracin. The chain is Undecaprenyl-diphosphatase from Porphyromonas gingivalis (strain ATCC 33277 / DSM 20709 / CIP 103683 / JCM 12257 / NCTC 11834 / 2561).